Consider the following 283-residue polypeptide: Polyamine aminopropyltransferase (283 aa).

In terms of domain architecture, PABS spans T5–S238. Q32 serves as a coordination point for S-methyl-5'-thioadenosine. H63 and D87 together coordinate spermidine. Residues E107 and D139–G140 each bind S-methyl-5'-thioadenosine. D158 acts as the Proton acceptor in catalysis. Spermidine is bound at residue D158–D161.

The protein belongs to the spermidine/spermine synthase family. Homodimer or homotetramer.

Its subcellular location is the cytoplasm. The enzyme catalyses S-adenosyl 3-(methylsulfanyl)propylamine + putrescine = S-methyl-5'-thioadenosine + spermidine + H(+). The protein operates within amine and polyamine biosynthesis; spermidine biosynthesis; spermidine from putrescine: step 1/1. In terms of biological role, catalyzes the irreversible transfer of a propylamine group from the amino donor S-adenosylmethioninamine (decarboxy-AdoMet) to putrescine (1,4-diaminobutane) to yield spermidine. This Prochlorococcus marinus (strain MIT 9215) protein is Polyamine aminopropyltransferase.